A 147-amino-acid polypeptide reads, in one-letter code: MSFRFGQHLIKPSVVFLKTELSFALVNRKPVVPGHVLVCPLRPVERFHDLRPDEVADLFQTTQRVGTVVEKHFHGTSLTFSMQDGPEAGQTVKHVHVHVLPRKAGDFHRNDSIYEELQKHDKEDFPASWRSEEEMAAEAAALRVYFQ.

Positions 2-109 constitute an HIT domain; it reads SFRFGQHLIK…LPRKAGDFHR (108 aa). Residues His-8, Asn-27, Gln-83, and 89–92 each bind substrate; that span reads GQTV. The Histidine triad motif motif lies at 94-98; that stretch reads HVHVH. His-96 functions as the Tele-AMP-histidine intermediate in the catalytic mechanism. A substrate-binding site is contributed by His-98. Tyr-114 carries the post-translational modification Phosphotyrosine; by SRC. A Phosphotyrosine modification is found at Tyr-145.

In terms of assembly, homodimer. Interacts with UBE2I. Interacts with MDM2. Interacts with CTNNB1. Identified in a complex with CTNNB1 and LEF1. In terms of processing, phosphorylation at Tyr-114 by SRC is required for induction of apoptosis. In terms of tissue distribution, low levels expressed in all tissues tested. Phospho-FHIT observed in liver and kidney, but not in brain and lung. Phospho-FHIT undetected in all tested human tumor cell lines.

The protein localises to the cytoplasm. It localises to the mitochondrion. The protein resides in the nucleus. The enzyme catalyses P(1),P(3)-bis(5'-adenosyl) triphosphate + H2O = AMP + ADP + 2 H(+). It catalyses the reaction adenosine 5'-phosphosulfate + H2O = sulfate + AMP + 2 H(+). The catalysed reaction is adenosine 5'-phosphosulfate + NH4(+) = adenosine 5'-phosphoramidate + sulfate + 2 H(+). It carries out the reaction adenosine 5'-phosphoramidate + H2O = AMP + NH4(+). Its function is as follows. Possesses dinucleoside triphosphate hydrolase activity. Cleaves P(1)-P(3)-bis(5'-adenosyl) triphosphate (Ap3A) to yield AMP and ADP. Can also hydrolyze P(1)-P(4)-bis(5'-adenosyl) tetraphosphate (Ap4A), but has extremely low activity with ATP. Exhibits adenylylsulfatase activity, hydrolyzing adenosine 5'-phosphosulfate to yield AMP and sulfate. Exhibits adenosine 5'-monophosphoramidase activity, hydrolyzing purine nucleotide phosphoramidates with a single phosphate group such as adenosine 5'monophosphoramidate (AMP-NH2) to yield AMP and NH2. Exhibits adenylylsulfate-ammonia adenylyltransferase, catalyzing the ammonolysis of adenosine 5'-phosphosulfate resulting in the formation of adenosine 5'-phosphoramidate. Also catalyzes the ammonolysis of adenosine 5-phosphorofluoridate and diadenosine triphosphate. Modulates transcriptional activation by CTNNB1 and thereby contributes to regulate the expression of genes essential for cell proliferation and survival, such as CCND1 and BIRC5. Plays a role in the induction of apoptosis via SRC and AKT1 signaling pathways. Inhibits MDM2-mediated proteasomal degradation of p53/TP53 and thereby plays a role in p53/TP53-mediated apoptosis. Induction of apoptosis depends on the ability of FHIT to bind P(1)-P(3)-bis(5'-adenosyl) triphosphate or related compounds, but does not require its catalytic activity, it may in part come from the mitochondrial form, which sensitizes the low-affinity Ca(2+) transporters, enhancing mitochondrial calcium uptake. Functions as a tumor suppressor. This chain is Bis(5'-adenosyl)-triphosphatase (FHIT), found in Homo sapiens (Human).